A 467-amino-acid chain; its full sequence is Dimethylamine methyltransferase MtbB3 (467 aa).

A non-standard amino acid (pyrrolysine) is located at residue pyrrolysine 356.

It belongs to the dimethylamine methyltransferase family.

It carries out the reaction Co(I)-[dimethylamine-specific corrinoid protein] + dimethylamine + H(+) = methyl-Co(III)-[dimethylamine-specific corrinoid protein] + methylamine. It functions in the pathway one-carbon metabolism; methanogenesis from dimethylamine. Its function is as follows. Catalyzes the transfer of a methyl group from dimethylamine to the corrinoid cofactor of MtbC. In Methanosarcina acetivorans (strain ATCC 35395 / DSM 2834 / JCM 12185 / C2A), this protein is Dimethylamine methyltransferase MtbB3 (mtbB3).